A 1220-amino-acid polypeptide reads, in one-letter code: Protein transport protein Sec31A (1220 aa).

WD repeat units lie at residues 4 to 47 (KEVD…EIFE), 68 to 111 (RYHK…AGDK), 120 to 160 (KHTG…TPMT), 166 to 206 (QPPE…PIIK), 209 to 254 (DHSN…SPLR), 258 to 298 (NHAR…VLYE), and 301 to 342 (TNTQ…DGLR). An interaction with SEC13 region spans residues 161–471 (PGAKTQPPED…IDASQTEFEK (311 aa)). The WD 8; interaction with SEC13 repeat unit spans residues 397 to 430 (SFSFGGKLVTFENVRMPSHQGAEQQQQQHHVFIS). S527 and S532 each carry phosphoserine. Residue K647 forms a Glycyl lysine isopeptide (Lys-Gly) (interchain with G-Cter in ubiquitin) linkage. Disordered stretches follow at residues 791-908 (GEPV…NAYP) and 924-1096 (QLYA…GNTF). Position 799 is a phosphoserine (S799). Positions 800–1113 (PKIPYEKQQL…TKKITKKPIP (314 aa)) are interaction with PDCD6. Positions 842-848 (GFIMHGN) match the ALG-2-binding site motif-2 (ABS-2) motif. Polar residues predominate over residues 849–859 (VNPNAAGQLPT). The span at 869-882 (PPYPQPQPYQPAQP) shows a compositional bias: pro residues. The span at 962–972 (PSSSAYALPPG) shows a compositional bias: low complexity. Composition is skewed to polar residues over residues 984 to 995 (PASQRTGPQNGW) and 1031 to 1053 (PQSQ…SSFP). T1161 is modified (phosphothreonine). S1163 bears the Phosphoserine mark. K1217 is covalently cross-linked (Glycyl lysine isopeptide (Lys-Gly) (interchain with G-Cter in ubiquitin)).

This sequence belongs to the WD repeat SEC31 family. As to quaternary structure, COPII is composed of at least 5 proteins: the SEC23/24 complex, the SEC13/31 complex and SAR1. SEC13 and SEC31 make a 2:2 tetramer that forms the edge element of the COPII outer coat. The tetramer self-assembles in multiple copies to form the complete polyhedral cage. Interacts (via WD 8) with SEC13. Interacts with PDCD6; interaction takes place in response to cytosolic calcium increase and leads to bridge together the BCR(KLHL12) complex and SEC31A, leading to monoubiquitination. Interacts with KLHL12. In terms of processing, monoubiquitinated by the BCR(KLHL12) E3 ubiquitin ligase complex, leading to regulate the size of COPII coats. As to expression, abundantly and ubiquitously expressed.

It is found in the cytoplasm. The protein resides in the cytoplasmic vesicle. The protein localises to the COPII-coated vesicle membrane. It localises to the endoplasmic reticulum membrane. Its subcellular location is the cytosol. Functionally, component of the coat protein complex II (COPII) which promotes the formation of transport vesicles from the endoplasmic reticulum (ER). The coat has two main functions, the physical deformation of the endoplasmic reticulum membrane into vesicles and the selection of cargo molecules. The protein is Protein transport protein Sec31A (SEC31A) of Homo sapiens (Human).